The following is a 280-amino-acid chain: Acyl-[acyl-carrier-protein]--UDP-N-acetylglucosamine O-acyltransferase (280 aa).

It belongs to the transferase hexapeptide repeat family. LpxA subfamily. In terms of assembly, homotrimer.

Its subcellular location is the cytoplasm. The catalysed reaction is a (3R)-hydroxyacyl-[ACP] + UDP-N-acetyl-alpha-D-glucosamine = a UDP-3-O-[(3R)-3-hydroxyacyl]-N-acetyl-alpha-D-glucosamine + holo-[ACP]. It functions in the pathway glycolipid biosynthesis; lipid IV(A) biosynthesis; lipid IV(A) from (3R)-3-hydroxytetradecanoyl-[acyl-carrier-protein] and UDP-N-acetyl-alpha-D-glucosamine: step 1/6. In terms of biological role, involved in the biosynthesis of lipid A, a phosphorylated glycolipid that anchors the lipopolysaccharide to the outer membrane of the cell. The polypeptide is Acyl-[acyl-carrier-protein]--UDP-N-acetylglucosamine O-acyltransferase (Chlamydia trachomatis serovar L2 (strain ATCC VR-902B / DSM 19102 / 434/Bu)).